The following is a 61-amino-acid chain: Large ribosomal subunit protein eL24 (61 aa).

Residues C7, C10, C33, and C37 each coordinate Zn(2+). A C4-type zinc finger spans residues 7–37 (CSFCGHEIPPGTGLMYVRNDGTMLWFCSSKC).

This sequence belongs to the eukaryotic ribosomal protein eL24 family. In terms of assembly, part of the 50S ribosomal subunit. Forms a cluster with proteins L3 and L14. Requires Zn(2+) as cofactor.

Binds to the 23S rRNA. This is Large ribosomal subunit protein eL24 from Saccharolobus islandicus (strain M.16.27) (Sulfolobus islandicus).